Consider the following 175-residue polypeptide: Interleukin-10 (175 aa).

The first 21 residues, 1–21 (MQTCCQALLLLLAACTLPAHC), serve as a signal peptide directing secretion. Disulfide bonds link cysteine 26/cysteine 123 and cysteine 77/cysteine 129.

Belongs to the IL-10 family. As to quaternary structure, homodimer. Interacts with IL10RA and IL10RB. As to expression, expressed predominantly in bursa of Fabricius and cecal tonsils with low levels in thymus, liver and lung.

It localises to the secreted. Its function is as follows. Major immune regulatory cytokine that acts on many cells of the immune system where it has profound anti-inflammatory functions, limiting excessive tissue disruption caused by inflammation. Mechanistically, IL10 binds to its heterotetrameric receptor comprising IL10RA and IL10RB leading to JAK1 and STAT2-mediated phosphorylation of STAT3. In turn, STAT3 translocates to the nucleus where it drives expression of anti-inflammatory mediators. Targets antigen-presenting cells (APCs) such as macrophages and monocytes and inhibits their release of pro-inflammatory cytokines including granulocyte-macrophage colony-stimulating factor /GM-CSF, granulocyte colony-stimulating factor/G-CSF, IL-1 alpha, IL-1 beta, IL-6, IL-8 and TNF-alpha. Also interferes with antigen presentation by reducing the expression of MHC-class II and co-stimulatory molecules, thereby inhibiting their ability to induce T cell activation. In addition, controls the inflammatory response of macrophages by reprogramming essential metabolic pathways including mTOR signaling. The protein is Interleukin-10 of Gallus gallus (Chicken).